Consider the following 41-residue polypeptide: Large ribosomal subunit protein bL36 (41 aa).

The protein belongs to the bacterial ribosomal protein bL36 family.

The chain is Large ribosomal subunit protein bL36 from Jannaschia sp. (strain CCS1).